Reading from the N-terminus, the 501-residue chain is Aldehyde dehydrogenase mpl4 (501 aa).

231-236 (GSTASG) lines the NAD(+) pocket. Residues Glu253 and Cys287 contribute to the active site.

It belongs to the aldehyde dehydrogenase family.

The enzyme catalyses an aldehyde + NAD(+) + H2O = a carboxylate + NADH + 2 H(+). The protein operates within mycotoxin biosynthesis. In terms of biological role, aldehyde dehydrogenase; part of the gene cluster that mediates the biosynthesis of the mycotoxin citrinin, a hepato-nephrotoxic compound to humans due to inhibition of respiration complex III. The pathway begins with the synthesis of a keto-aldehyde intermediate by the citrinin PKS (pksCT) from successive condensations of 4 malonyl-CoA units, presumably with a simple acetyl-CoA starter unit. Release of the keto-aldehyde intermediate is consistent with the presence of the C-terminal reductive release domain. Mp11 collaborates with pksCT by catalyzing the hydrolysis of ACP-bound acyl intermediates to free the ACP from stalled intermediates. Mpl2 then catalyzes the oxidation of the C-12 methyl of the ketone intermediate to an alcohol intermediate which is further oxidized by the oxidoreductase mpl7 to produce a bisaldehyde intermediate. The fourth catalytic step is catalyzed by the mpl4 aldehyde dehydrogenase. The final transformation is the reduction of C-3 by mpl6 to provide the chemically stable citrinin nucleus. The sequence is that of Aldehyde dehydrogenase mpl4 from Monascus purpureus (Red mold).